A 489-amino-acid polypeptide reads, in one-letter code: MEMETSVLGLSSTLIIALAITVIFLLKAKSSSAIKWPPGPKTLPIIGNLHQLGGDELHIVLAKLARVHGAIMTIWMAKKPVIVVSDVNSVWEVLVSKSSDYAARDAAEISKIVSASSHSINTSDSGPYWQTLRRGLTHGPLGPLNISAQIPIQQRDMQRVIREMQQDAAANGGVIKPLDHLKRSSTRLVSRLIFGDTFDNDPYNDSMHEVVQDLNRFGGIALLEQAFSFAKYLPSYKRGVKEFHIHKRKIDDLVRPVVASSNPPSNSYLGFLQSQNYSEEIIIACIFELYLLAMDSSASTATWALAFMIRDQQVQEKLYQDIKRVIGDEVGLVKAEDLSKMHYLQAVVKETMRMKPIAPLAIPHKTAIDTSLMGTKVPKGTCVMVNLYALHHDESVWAKPYTFMPERFLQREDGKSVTEQAFLPFGAGMRICGGMEVGKLQFSLALANLVNAFKWTSAAEGKLPDMSDELQFITVMKTPLEARIVPRNP.

The chain crosses the membrane as a helical span at residues 6–26 (SVLGLSSTLIIALAITVIFLL). A heme-binding site is contributed by Cys432.

The protein belongs to the cytochrome P450 family. It depends on heme as a cofactor.

It is found in the membrane. It catalyses the reaction (-)-matairesinol + reduced [NADPH--hemoprotein reductase] + O2 = (-)-pluviatolide + oxidized [NADPH--hemoprotein reductase] + 2 H2O + H(+). It participates in aromatic compound metabolism; phenylpropanoid biosynthesis. Functionally, cytochrome P450 involved in the biosynthesis of etoposide, a chemotherapeutic compound of the topoisomerase inhibitor family. Catalyzes the conversion of matairesinol to pluviatolide. The sequence is that of Pluviatolide synthase from Podophyllum peltatum (American mandrake).